A 1522-amino-acid polypeptide reads, in one-letter code: MSVRLPQSIDRLSSLSSLGDSAPERKSPSHHRQPSDASETTGLVQRCVIIQKDQHGFGFTVSGDRIVLVQSVRPGGAAMKAGVKEGDRIIKVNGTMVTNSSHLEVVKLIKSGAYVALTLLGSSPSSMGISGLQQDPSPAGAPRITSVIPSPPPPPPLPPPQRITGPKPLQDPEVQKHATQILRNMLRQEEKELQDILPLYGDTSQRPSEGRLSLDSQEGDSGLDSGTERFPSLSESLMNRNSVLSDPGLDSPRTSPVIMARVAQHHRRQGSDAAVPSTGDQGVDQSPKPLIIGPEEDYDPGYFNNESDIIFQDLEKLKSRPAHLGVFLRYIFSQADPSPLLFYLCAEVYQQASPKDSRSLGKDIWNIFLEKNAPLRVKIPEMLQAEIDSRLRNSEDARGVLCEAQEAAMPEIQEQIHDYRTKRTLGLGSLYGENDLLDLDGDPLRERQVAEKQLAALGDILSKYEEDRSAPMDFALNTYMSHAGIRLREARPSNTAEKAQSAPDKDKWLPFFPKTKKSSNSKKEKDALEDKKRNPILKYIGKPKSSSQSTFHIPLSPVEVKPGNVRNIIQHFENNQQYDAPEPGTQRLSTGSFPEDLLESDSSRSEIRLGRSESLKGREEMKRSRKAENVPRSRSDVDMDAAAEATRLHQSASSSTSSLSTRSLENPTPPFTPKMGRRSIESPSLGFCTDTLLPHLLEDDLGQLSDLEPEPDAQNWQHTVGKDVVAGLTQREIDRQEVINELFVTEASHLRTLRVLDLIFYQRMKKENLMPREELARLFPNLPELIEIHNSWCEAMKKLREEGPIIKEISDLMLARFDGPAREELQQVAAQFCSYQSIALELIKTKQRKESRFQLFMQEAESHPQCRRLQLRDLIISEMQRLTKYPLLLESIIKHTEGGTSEHEKLCRARDQCREILKYVNEAVKQTENRHRLEGYQKRLDATALERASNPLAAEFKSLDLTTRKMIHEGPLTWRISKDKTLDLHVLLLEDLLVLLQKQDEKLLLKCHSKTAVGSSDSKQTFSPVLKLNAVLIRSVATDKRAFFIICTSKLGPPQIYELVALTSSDKNTWMELLEEAVRNATRHPGAAPMPVHPPPPGPREPAQQGPTPSRVELDDSDVFHGEPEPEELPGGTGSQQRVQGKHQVLLEDPEQEGSAEEEELGVLPCPSTSLDGENRGIRTRNPIHLAFPGPLFMEGLADSALEDVENLRHLILWSLLPGHTMETQAAQEPEDDLTPTPSVISVTSHPWDPGSPGQAPPGGEGDNTQLAGLEGERPEQEDMGLCSLEHLPPRTRNSGIWESPELDRNLAEDASSTEAAGGYKVVRKAEVAGSKVVPALPESGQSEPGPPEVEGGTKATGNCFYVSMPSGPPDSSTDHSEAPMSPPQPDSLPAGQTEPQPQLQGGNDDPRRPSRSPPSLALRDVGMIFHTIEQLTLKLNRLKDMELAHRELLKSLGGESSGGTTPVGSFHTEAARWTDGSLSPPAKEPLASDSRNSHELGPCPEDGSDAPLEDSTADAAASPGP.

A disordered region spans residues 1-40 (MSVRLPQSIDRLSSLSSLGDSAPERKSPSHHRQPSDASET). Phosphoserine is present on residues Ser-2, Ser-14, Ser-16, and Ser-35. A PDZ domain is found at 47–126 (CVIIQKDQHG…LTLLGSSPSS (80 aa)). Disordered regions lie at residues 128 to 175 (GISG…PEVQ) and 200 to 231 (YGDT…ERFP). Positions 149–161 (PSPPPPPPLPPPQ) are enriched in pro residues. Residues Ser-245 and Ser-251 each carry the phosphoserine modification. Thr-254 carries the phosphothreonine modification. Ser-255 and Ser-271 each carry phosphoserine. The tract at residues 263–286 (AQHHRRQGSDAAVPSTGDQGVDQS) is disordered. The 181-residue stretch at 306-486 (ESDIIFQDLE…NTYMSHAGIR (181 aa)) folds into the RGSL domain. Residues 444 to 470 (LRERQVAEKQLAALGDILSKYEEDRSA) are a coiled coil. Residues 490–555 (ARPSNTAEKA…SSQSTFHIPL (66 aa)) are disordered. A compositionally biased stretch (basic and acidic residues) spans 521 to 533 (SKKEKDALEDKKR). Phosphoserine occurs at positions 556, 635, and 663. Positions 573–680 (ENNQQYDAPE…FTPKMGRRSI (108 aa)) are disordered. A compositionally biased stretch (basic and acidic residues) spans 601 to 637 (DSSRSEIRLGRSESLKGREEMKRSRKAENVPRSRSDV). A compositionally biased stretch (low complexity) spans 651–664 (SASSSTSSLSTRSL). 2 positions are modified to phosphothreonine: Thr-668 and Thr-672. Residues 734–923 (DRQEVINELF…REILKYVNEA (190 aa)) form the DH domain. Residues 965-1079 (KMIHEGPLTW…WMELLEEAVR (115 aa)) form the PH domain. A disordered region spans residues 1084–1141 (HPGAAPMPVHPPPPGPREPAQQGPTPSRVELDDSDVFHGEPEPEELPGGTGSQQRVQG). Pro residues predominate over residues 1091–1100 (PVHPPPPGPR). Positions 1112–1124 (VELDDSDVFHGEP) are enriched in basic and acidic residues. Ser-1155 carries the phosphoserine modification. Disordered stretches follow at residues 1223–1320 (ETQA…AGGY), 1332–1423 (KVVP…RDVG), and 1453–1522 (LGGE…SPGP). Over residues 1236 to 1245 (PTPSVISVTS) the composition is skewed to polar residues. Phosphoserine occurs at positions 1295 and 1300. Over residues 1338–1353 (PESGQSEPGPPEVEGG) the composition is skewed to low complexity. 2 positions are modified to phosphoserine: Ser-1457 and Ser-1458. Residues Thr-1462 and Thr-1475 each carry the phosphothreonine modification. Ser-1480 is modified (phosphoserine). Over residues 1503 to 1513 (DGSDAPLEDST) the composition is skewed to acidic residues.

In terms of assembly, interacts with GNA12 and GNA13 through the RGS domain. Interacts with RHOA, PLXNB1 and PLXNB2. Interacts with SLC1A6. Interacts (via DH domain) with GCSAM (via C-terminus). Found in a complex with ARHGEF11 and ARHGEF12; binding to ARHGEF11 and ARHGEF12 enhances CDC42 GEF activity of PLEKHG4B, and PLEKHG4B, in turn, inhibits ARHGEF11- and ARHGEF12-mediated RHOA activation. In terms of processing, phosphorylated by MAP kinase p38 (MAPK11, MAPK12, MAPK13 and/or MAPK14). Post-translationally, ubiquitinated by the BCR(KLHL20) E3 ubiquitin ligase complex when previously phosphorylated by MAP kinase p38 (MAPK11, MAPK12, MAPK13 and/or MAPK14), leading to its degradation, thereby restricting RhoA activity and facilitating growth cone spreading and neurite outgrowth. In terms of tissue distribution, ubiquitously expressed.

The protein resides in the cytoplasm. It localises to the membrane. May play a role in the regulation of RhoA GTPase by guanine nucleotide-binding alpha-12 (GNA12) and alpha-13 (GNA13). Acts as guanine nucleotide exchange factor (GEF) for RhoA GTPase and may act as GTPase-activating protein (GAP) for GNA12 and GNA13. Involved in neurotrophin-induced neurite outgrowth. The sequence is that of Rho guanine nucleotide exchange factor 11 (ARHGEF11) from Homo sapiens (Human).